Reading from the N-terminus, the 605-residue chain is Alpha-1,3-galactosidase B (605 aa).

An N-terminal signal peptide occupies residues 1 to 19 (MKRIIFNFCFVWLAVSAFA). PbH1 repeat units follow at residues 428 to 450 (CPEV…LFST), 451 to 473 (PLKT…LLCG), and 484 to 538 (CRNV…VIED).

Belongs to the glycosyl hydrolase 110 family. B subfamily.

The enzyme catalyses Hydrolysis of terminal, non-reducing branched (1-&gt;3)-alpha-D-galactosidic residues, producing free D-galactose.. The catalysed reaction is Hydrolysis of terminal, non-reducing linear (1-&gt;3)-alpha-D-galactosidic residues, producing free D-galactose.. It catalyses the reaction Hydrolysis of terminal, non-reducing alpha-D-galactose residues in alpha-D-galactosides, including galactose oligosaccharides, galactomannans and galactolipids.. Its function is as follows. Alpha-galactosidase. Removes both branched alpha-1,3-linked galactose residues of blood group B antigens and linear alpha-1,3-linked galactose structures. This chain is Alpha-1,3-galactosidase B (glaB2), found in Phocaeicola vulgatus (strain ATCC 8482 / DSM 1447 / JCM 5826 / CCUG 4940 / NBRC 14291 / NCTC 11154) (Bacteroides vulgatus).